The sequence spans 1404 residues: DNA-directed RNA polymerase subunit beta' (1404 aa).

Zn(2+) contacts are provided by cysteine 60, cysteine 62, cysteine 75, and cysteine 78. Residues aspartate 449, aspartate 451, and aspartate 453 each contribute to the Mg(2+) site. Zn(2+) contacts are provided by cysteine 778, cysteine 852, cysteine 859, and cysteine 862. Positions 1380 to 1404 (LDRPLEEEEEEEIPQAIAEESDAEE) are disordered. The span at 1384–1404 (LEEEEEEEIPQAIAEESDAEE) shows a compositional bias: acidic residues.

This sequence belongs to the RNA polymerase beta' chain family. As to quaternary structure, the RNAP catalytic core consists of 2 alpha, 1 beta, 1 beta' and 1 omega subunit. When a sigma factor is associated with the core the holoenzyme is formed, which can initiate transcription. Mg(2+) serves as cofactor. The cofactor is Zn(2+).

The enzyme catalyses RNA(n) + a ribonucleoside 5'-triphosphate = RNA(n+1) + diphosphate. In terms of biological role, DNA-dependent RNA polymerase catalyzes the transcription of DNA into RNA using the four ribonucleoside triphosphates as substrates. In Leptospira interrogans serogroup Icterohaemorrhagiae serovar Lai (strain 56601), this protein is DNA-directed RNA polymerase subunit beta'.